A 121-amino-acid chain; its full sequence is Splicing factor 3B subunit 6 (121 aa).

The tract at residues 12–25 is interaction with pre-mRNA branch site; sequence EVNRLLYVRNLPYK. Positions 15-90 constitute an RRM domain; sequence RLLYVRNLPY…RYLVVLYYQS (76 aa).

This sequence belongs to the SF3B6 family. In terms of assembly, component of splicing factor SF3B complex. Component of the U11/U12 snRNPs that are part of the U12-type spliceosome.

The protein resides in the nucleus. Functionally, involved in pre-mRNA splicing as a component of the splicing factor SF3B complex. SF3B complex is required for 'A' complex assembly formed by the stable binding of U2 snRNP to the branchpoint sequence (BPS) in pre-mRNA. Directly contacts the pre-mRNA branch site adenosine for the first catalytic step of splicing. Enters the spliceosome and associates with the pre-mRNA branch site as part of the 17S U2 or, in the case of the minor spliceosome, as part of the 18S U11/U12 snRNP complex, and thus may facilitate the interaction of these snRNP with the branch sites of U2 and U12 respectively. This Drosophila melanogaster (Fruit fly) protein is Splicing factor 3B subunit 6.